Here is a 129-residue protein sequence, read N- to C-terminus: DNA-directed RNA polymerase III subunit rpc9 (129 aa).

This sequence belongs to the eukaryotic RPC9 RNA polymerase subunit family. Component of the RNA polymerase III (Pol III) complex.

Its subcellular location is the cytoplasm. It localises to the nucleus. Its function is as follows. DNA-dependent RNA polymerase catalyzes the transcription of DNA into RNA using the four ribonucleoside triphosphates as substrates. Specific peripheric component of RNA polymerase III which synthesizes small RNAs, such as 5S rRNA and tRNAs. The polypeptide is DNA-directed RNA polymerase III subunit rpc9 (rpc17) (Schizosaccharomyces pombe (strain 972 / ATCC 24843) (Fission yeast)).